The chain runs to 860 residues: Transcription factor E2F8 (860 aa).

The segment at 1-114 (MENQKENLFS…NEKSQPSRKE (114 aa)) is disordered. A Phosphoserine modification is found at Ser71. 2 stretches are compositionally biased toward basic and acidic residues: residues 74–84 (IRSRDQKRGLS) and 92–114 (EARD…SRKE). 2 consecutive DNA-binding regions follow at residues 112-181 (RKEK…TWHG) and 261-347 (RKDK…KWTG). Disordered stretches follow at residues 407–433 (RRKI…PPVP) and 533–616 (TPPH…PKED). Over residues 411-426 (SSAPSSPVKSSKAESS) the composition is skewed to low complexity. 2 positions are modified to phosphoserine: Ser412 and Ser416. Residues 542–554 (VCPTQSSNATGSK) show a composition bias toward polar residues. Basic and acidic residues-rich tracts occupy residues 555–565 (DPTDAPTEKTA) and 586–596 (RSKETTGDRGT).

This sequence belongs to the E2F/DP family. Homodimer and heterodimer: mainly forms homodimers and, to a lesser extent, heterodimers with E2F8. Dimerization is important for DNA-binding. Interacts with HIF1A.

Its subcellular location is the nucleus. Functionally, atypical E2F transcription factor that participates in various processes such as angiogenesis and polyploidization of specialized cells. Mainly acts as a transcription repressor that binds DNA independently of DP proteins and specifically recognizes the E2 recognition site 5'-TTTC[CG]CGC-3'. Directly represses transcription of classical E2F transcription factors such as E2F1: component of a feedback loop in S phase by repressing the expression of E2F1, thereby preventing p53/TP53-dependent apoptosis. Plays a key role in polyploidization of cells in placenta and liver by regulating the endocycle, probably by repressing genes promoting cytokinesis and antagonizing action of classical E2F proteins (E2F1, E2F2 and/or E2F3). Required for placental development by promoting polyploidization of trophoblast giant cells. Acts as a promoter of sprouting angiogenesis, possibly by acting as a transcription activator: associates with HIF1A, recognizes and binds the VEGFA promoter, which is different from canonical E2 recognition site, and activates expression of the VEGFA gene. This is Transcription factor E2F8 (E2f8) from Rattus norvegicus (Rat).